The primary structure comprises 127 residues: Small ribosomal subunit protein bS16 (127 aa).

Residues 80–127 (GLKKRPTRNNPHKGEPGKKAQERIAAAKQAAEEAAAAKTESAPISEEV) are disordered. The span at 81–90 (LKKRPTRNNP) shows a compositional bias: basic residues. A compositionally biased stretch (basic and acidic residues) spans 91–101 (HKGEPGKKAQE). The segment covering 102 to 121 (RIAAAKQAAEEAAAAKTESA) has biased composition (low complexity).

Belongs to the bacterial ribosomal protein bS16 family.

This chain is Small ribosomal subunit protein bS16, found in Bartonella henselae (strain ATCC 49882 / DSM 28221 / CCUG 30454 / Houston 1) (Rochalimaea henselae).